The chain runs to 291 residues: NAD kinase (291 aa).

Residue Asp72 is the Proton acceptor of the active site. Residues 72–73, 146–147, Arg157, Arg174, Asp176, 187–192, and Gln247 each bind NAD(+); these read DG, ND, and TAYSLS.

The protein belongs to the NAD kinase family. It depends on a divalent metal cation as a cofactor.

It is found in the cytoplasm. It carries out the reaction NAD(+) + ATP = ADP + NADP(+) + H(+). Functionally, involved in the regulation of the intracellular balance of NAD and NADP, and is a key enzyme in the biosynthesis of NADP. Catalyzes specifically the phosphorylation on 2'-hydroxyl of the adenosine moiety of NAD to yield NADP. The protein is NAD kinase of Hydrogenovibrio crunogenus (strain DSM 25203 / XCL-2) (Thiomicrospira crunogena).